The sequence spans 662 residues: DNA topoisomerase 4 subunit B (662 aa).

ATP contacts are provided by residues tyrosine 20, asparagine 60, aspartate 87, glycine 129–isoleucine 135, and lysine 359. A Toprim domain is found at threonine 439 to proline 553. Glutamate 445, aspartate 518, and aspartate 520 together coordinate Mg(2+).

The protein belongs to the type II topoisomerase family. ParE type 1 subfamily. Heterotetramer composed of ParC and ParE. Requires Mg(2+) as cofactor. It depends on Mn(2+) as a cofactor. Ca(2+) is required as a cofactor.

The enzyme catalyses ATP-dependent breakage, passage and rejoining of double-stranded DNA.. Topoisomerase IV is essential for chromosome segregation. It relaxes supercoiled DNA. Performs the decatenation events required during the replication of a circular DNA molecule. This is DNA topoisomerase 4 subunit B from Rickettsia prowazekii (strain Madrid E).